The sequence spans 398 residues: Probable aminomethyltransferase (398 aa).

This sequence belongs to the GcvT family. As to quaternary structure, the glycine cleavage system is composed of four proteins: P, T, L and H.

The enzyme catalyses N(6)-[(R)-S(8)-aminomethyldihydrolipoyl]-L-lysyl-[protein] + (6S)-5,6,7,8-tetrahydrofolate = N(6)-[(R)-dihydrolipoyl]-L-lysyl-[protein] + (6R)-5,10-methylene-5,6,7,8-tetrahydrofolate + NH4(+). Its function is as follows. The glycine cleavage system catalyzes the degradation of glycine. This chain is Probable aminomethyltransferase, found in Thermococcus kodakarensis (strain ATCC BAA-918 / JCM 12380 / KOD1) (Pyrococcus kodakaraensis (strain KOD1)).